A 209-amino-acid chain; its full sequence is Ribosomal RNA large subunit methyltransferase E (209 aa).

S-adenosyl-L-methionine-binding residues include glycine 63, tryptophan 65, aspartate 83, aspartate 99, and aspartate 124. Lysine 164 (proton acceptor) is an active-site residue. In terms of domain architecture, TRAM spans 191–209 (EASRGRSREVYIVAMGYMG).

The protein belongs to the class I-like SAM-binding methyltransferase superfamily. RNA methyltransferase RlmE family.

Its subcellular location is the cytoplasm. It catalyses the reaction uridine(2552) in 23S rRNA + S-adenosyl-L-methionine = 2'-O-methyluridine(2552) in 23S rRNA + S-adenosyl-L-homocysteine + H(+). In terms of biological role, specifically methylates the uridine in position 2552 of 23S rRNA at the 2'-O position of the ribose in the fully assembled 50S ribosomal subunit. In Histophilus somni (strain 129Pt) (Haemophilus somnus), this protein is Ribosomal RNA large subunit methyltransferase E.